Consider the following 418-residue polypeptide: Light-independent protochlorophyllide reductase subunit N (418 aa).

3 residues coordinate [4Fe-4S] cluster: Cys17, Cys42, and Cys103.

The protein belongs to the BchN/ChlN family. Protochlorophyllide reductase is composed of three subunits; ChlL, ChlN and ChlB. Forms a heterotetramer of two ChlB and two ChlN subunits. Requires [4Fe-4S] cluster as cofactor.

The enzyme catalyses chlorophyllide a + oxidized 2[4Fe-4S]-[ferredoxin] + 2 ADP + 2 phosphate = protochlorophyllide a + reduced 2[4Fe-4S]-[ferredoxin] + 2 ATP + 2 H2O. The protein operates within porphyrin-containing compound metabolism; chlorophyll biosynthesis (light-independent). Functionally, component of the dark-operative protochlorophyllide reductase (DPOR) that uses Mg-ATP and reduced ferredoxin to reduce ring D of protochlorophyllide (Pchlide) to form chlorophyllide a (Chlide). This reaction is light-independent. The NB-protein (ChlN-ChlB) is the catalytic component of the complex. The sequence is that of Light-independent protochlorophyllide reductase subunit N from Prochlorococcus marinus (strain MIT 9303).